Consider the following 378-residue polypeptide: Acid phosphatase-like protein XcAP-2 (378 aa).

An N-terminal signal peptide occupies residues 1–19 (MKTTILLLVVLTIVQLSKA). 3 cysteine pairs are disulfide-bonded: C147–C374, C168–C220, and C347–C351.

It belongs to the histidine acid phosphatase family.

It is found in the secreted. In terms of biological role, probably modulates blood feeding of fleas on vertebrate species by binding and sequestering different mediators involved in the host response. Binds histamine. Binds leukotriene B4, leukotriene C4, leukotriene D4 and leukotriene E4. Does not bind serotonin, adrenaline, noradrenaline, ADP, and stable analogs of thromboxane A2: U-46619 and cTXA2. The protein is Acid phosphatase-like protein XcAP-2 of Xenopsylla cheopis (Oriental rat flea).